Here is a 254-residue protein sequence, read N- to C-terminus: Ribosomal protein L11 methyltransferase (254 aa).

Residues Thr107, Gly128, Asp149, Ser175, and Asn191 each coordinate S-adenosyl-L-methionine.

It belongs to the methyltransferase superfamily. PrmA family.

The protein resides in the cytoplasm. The enzyme catalyses L-lysyl-[protein] + 3 S-adenosyl-L-methionine = N(6),N(6),N(6)-trimethyl-L-lysyl-[protein] + 3 S-adenosyl-L-homocysteine + 3 H(+). The catalysed reaction is an N-terminal L-alpha-aminoacyl-[protein] + 3 S-adenosyl-L-methionine = an N-terminal trimethyl-L-alpha-aminoacyl-[protein] + 3 S-adenosyl-L-homocysteine + 3 H(+). Methylates ribosomal protein L11. Preferentially recognizes free L11 before its incorporation into 50S subunits. This function is dispensable for growth and thermostability. The sequence is that of Ribosomal protein L11 methyltransferase from Thermus thermophilus (strain ATCC 27634 / DSM 579 / HB8).